Consider the following 540-residue polypeptide: Malolactic enzyme (540 aa).

The active-site Proton donor is Y90. The active-site Proton acceptor is the K163. K163 provides a ligand contact to substrate. Mn(2+) contacts are provided by E234, D235, and D258. Residues 291 to 294 (GGSA), N403, and N448 each bind NAD(+). N448 contacts substrate.

The protein belongs to the malic enzymes family. As to quaternary structure, homodimer. Mn(2+) is required as a cofactor. The cofactor is NAD(+).

It catalyses the reaction (S)-malate + H(+) = (S)-lactate + CO2. Its function is as follows. Involved in the malolactic fermentation (MLF) of wine, which results in a natural decrease in acidity and favorable changes in wine flavors. Catalyzes the decarboxylation of L-malate to L-lactate. The sequence is that of Malolactic enzyme from Lactococcus lactis subsp. lactis (strain IL1403) (Streptococcus lactis).